A 356-amino-acid polypeptide reads, in one-letter code: Protein RecA (356 aa).

68 to 75 (GPESSGKT) serves as a coordination point for ATP.

It belongs to the RecA family.

Its subcellular location is the cytoplasm. Can catalyze the hydrolysis of ATP in the presence of single-stranded DNA, the ATP-dependent uptake of single-stranded DNA by duplex DNA, and the ATP-dependent hybridization of homologous single-stranded DNAs. It interacts with LexA causing its activation and leading to its autocatalytic cleavage. In Clostridium botulinum (strain Eklund 17B / Type B), this protein is Protein RecA.